The chain runs to 289 residues: 3-methyl-2-oxobutanoate hydroxymethyltransferase (289 aa).

Mg(2+) is bound by residues Asp-58 and Asp-99. 3-methyl-2-oxobutanoate-binding positions include 58-59 (DS), Asp-99, and Lys-128. Glu-130 is a binding site for Mg(2+). The Proton acceptor role is filled by Glu-197.

This sequence belongs to the PanB family. In terms of assembly, homodecamer; pentamer of dimers. Requires Mg(2+) as cofactor.

The protein resides in the cytoplasm. It carries out the reaction 3-methyl-2-oxobutanoate + (6R)-5,10-methylene-5,6,7,8-tetrahydrofolate + H2O = 2-dehydropantoate + (6S)-5,6,7,8-tetrahydrofolate. It participates in cofactor biosynthesis; (R)-pantothenate biosynthesis; (R)-pantoate from 3-methyl-2-oxobutanoate: step 1/2. Functionally, catalyzes the reversible reaction in which hydroxymethyl group from 5,10-methylenetetrahydrofolate is transferred onto alpha-ketoisovalerate to form ketopantoate. This Leptothrix cholodnii (strain ATCC 51168 / LMG 8142 / SP-6) (Leptothrix discophora (strain SP-6)) protein is 3-methyl-2-oxobutanoate hydroxymethyltransferase.